Reading from the N-terminus, the 425-residue chain is UDP-N-acetylglucosamine 1-carboxyvinyltransferase (425 aa).

23 to 24 (KN) lines the phosphoenolpyruvate pocket. R100 is a binding site for UDP-N-acetyl-alpha-D-glucosamine. C124 functions as the Proton donor in the catalytic mechanism. C124 carries the post-translational modification 2-(S-cysteinyl)pyruvic acid O-phosphothioketal. UDP-N-acetyl-alpha-D-glucosamine-binding residues include D313 and I335.

The protein belongs to the EPSP synthase family. MurA subfamily.

Its subcellular location is the cytoplasm. The catalysed reaction is phosphoenolpyruvate + UDP-N-acetyl-alpha-D-glucosamine = UDP-N-acetyl-3-O-(1-carboxyvinyl)-alpha-D-glucosamine + phosphate. It functions in the pathway cell wall biogenesis; peptidoglycan biosynthesis. In terms of biological role, cell wall formation. Adds enolpyruvyl to UDP-N-acetylglucosamine. In Wolbachia sp. subsp. Brugia malayi (strain TRS), this protein is UDP-N-acetylglucosamine 1-carboxyvinyltransferase.